The sequence spans 92 residues: Small ribosomal subunit protein uS19 (92 aa).

Belongs to the universal ribosomal protein uS19 family.

Functionally, protein S19 forms a complex with S13 that binds strongly to the 16S ribosomal RNA. This is Small ribosomal subunit protein uS19 from Leptospira biflexa serovar Patoc (strain Patoc 1 / Ames).